We begin with the raw amino-acid sequence, 914 residues long: Probable dipeptidyl-aminopeptidase B (914 aa).

The segment covering 1–10 (MATFSDHETS) has biased composition (basic and acidic residues). Positions 1–63 (MATFSDHETS…TGMDNGDRYR (63 aa)) are disordered. Residues 1–91 (MATFSDHETS…KAATGGRARR (91 aa)) lie on the Cytoplasmic side of the membrane. Residues 20-35 (STSSASQTSSDSGLSS) are compositionally biased toward low complexity. Polar residues predominate over residues 45–56 (QPFSAPNGTTGM). A helical; Signal-anchor for type II membrane protein membrane pass occupies residues 92-112 (IFWLLVLLCFGGWLLAFVLFL). Residues 113-914 (TGGRANYQSA…RFKRSLPVLV (802 aa)) are Vacuolar-facing. N-linked (GlcNAc...) asparagine glycans are attached at residues asparagine 348, asparagine 565, and asparagine 639. Serine 753 acts as the Charge relay system in catalysis. Asparagine 807 carries an N-linked (GlcNAc...) asparagine glycan. Active-site charge relay system residues include aspartate 830 and histidine 863.

This sequence belongs to the peptidase S9B family.

The protein resides in the vacuole membrane. The catalysed reaction is Release of an N-terminal dipeptide, Xaa-Yaa-|-Zaa-, from a polypeptide, preferentially when Yaa is Pro, provided Zaa is neither Pro nor hydroxyproline.. In terms of biological role, type IV dipeptidyl-peptidase which removes N-terminal dipeptides sequentially from polypeptides having unsubstituted N-termini provided that the penultimate residue is proline. This chain is Probable dipeptidyl-aminopeptidase B (dapB), found in Aspergillus clavatus (strain ATCC 1007 / CBS 513.65 / DSM 816 / NCTC 3887 / NRRL 1 / QM 1276 / 107).